Consider the following 508-residue polypeptide: GTPase Obg (508 aa).

An Obg domain is found at 2 to 159; it reads ARFVDRVVLH…HDVILELKSM (158 aa). The 182-residue stretch at 160–341 folds into the OBG-type G domain; it reads ADIGLVGFPS…LKYAMLDLVQ (182 aa). GTP is bound by residues 166-173, 191-195, 212-215, 292-295, and 322-324; these read GFPSAGKS, FTTLQ, DVPG, NKAD, and SAV. Residues Ser173 and Thr193 each contribute to the Mg(2+) site. Residues 364-444 enclose the OCT domain; sequence DARKKNKDFE…IGEVSFEWEP (81 aa).

The protein belongs to the TRAFAC class OBG-HflX-like GTPase superfamily. OBG GTPase family. In terms of assembly, monomer. Mg(2+) serves as cofactor.

Its subcellular location is the cytoplasm. An essential GTPase which binds GTP, GDP and possibly (p)ppGpp with moderate affinity, with high nucleotide exchange rates and a fairly low GTP hydrolysis rate. Plays a role in control of the cell cycle, stress response, ribosome biogenesis and in those bacteria that undergo differentiation, in morphogenesis control. This Corynebacterium diphtheriae (strain ATCC 700971 / NCTC 13129 / Biotype gravis) protein is GTPase Obg.